The primary structure comprises 584 residues: Pentatricopeptide repeat-containing protein At2g01510, mitochondrial (584 aa).

Residues 1–20 constitute a mitochondrion transit peptide; the sequence is MLAKQTPLTKQMLSELLRAS. PPR repeat units lie at residues 73–107, 108–142, 143–173, 174–208, 209–243, 244–274, 275–309, 310–344, and 348–378; these read RIFL…GVRP, DEFT…GFGC, LGIV…MQVK, DLVA…AVQF, DSFT…EIDC, NIIV…MKQR, NVVS…GLRP, NYVT…NDKN, and RKEH…MPVE. Positions 383-458 are type E motif; it reads IWGALLGACA…VAAYSSVEFE (76 aa). The type E(+) motif stretch occupies residues 459–489; sequence GKIHFFNRGDKSHPQSKAIYEKLDEILKKIR. Residues 490–584 form a type DYW motif region; the sequence is KMGYVPDTCS…NGVCSCKEFW (95 aa).

It belongs to the PPR family. PCMP-H subfamily.

The protein resides in the mitochondrion. The chain is Pentatricopeptide repeat-containing protein At2g01510, mitochondrial (PCMP-H37) from Arabidopsis thaliana (Mouse-ear cress).